Here is a 73-residue protein sequence, read N- to C-terminus: STKNGRDSNSKRLGVKVYGNQPAKAGSIIVRQRGLTFKPGKGVSVGKDYTIFATQNGIVQFESDKKEKIISVY.

Belongs to the bacterial ribosomal protein bL27 family.

Its subcellular location is the plastid. The protein resides in the chloroplast. This chain is Large ribosomal subunit protein bL27c (rpl27), found in Chrysochromulina alifera (Plankton alga).